We begin with the raw amino-acid sequence, 354 residues long: Histidinol-phosphate aminotransferase (354 aa).

N6-(pyridoxal phosphate)lysine is present on lysine 210.

The protein belongs to the class-II pyridoxal-phosphate-dependent aminotransferase family. Histidinol-phosphate aminotransferase subfamily. In terms of assembly, homodimer. Pyridoxal 5'-phosphate serves as cofactor.

It carries out the reaction L-histidinol phosphate + 2-oxoglutarate = 3-(imidazol-4-yl)-2-oxopropyl phosphate + L-glutamate. It functions in the pathway amino-acid biosynthesis; L-histidine biosynthesis; L-histidine from 5-phospho-alpha-D-ribose 1-diphosphate: step 7/9. In Clostridium botulinum (strain Langeland / NCTC 10281 / Type F), this protein is Histidinol-phosphate aminotransferase.